The chain runs to 372 residues: Actin-related protein 2/3 complex subunit 1B (372 aa).

WD repeat units lie at residues 6–45 (FLVEPISCHAWNKDRTQIAICPNNHEVHIYEKSGAKWTKV), 50–89 (EHNGQVTGIDWAPESNRIVTCGTDRNAYVWTLKGRTWKPT), 94–135 (RINR…WVCK), 140–179 (PIRSTVLSLDWHPNNVLLAAGSCDFKCRIFSAYIKEVEER), 242–280 (SETLPLLALTFITDNSLVAAGHDCFPVLFTYDAAAGMLS), and 324–367 (LHKN…SALK).

This sequence belongs to the WD repeat ARPC1 family. Component of the Arp2/3 complex composed of ACTR2/ARP2, ACTR3/ARP3, ARPC1B/p41-ARC, ARPC2/p34-ARC, ARPC3/p21-ARC, ARPC4/p20-ARC and ARPC5/p16-ARC.

It localises to the cytoplasm. It is found in the cytoskeleton. The protein localises to the nucleus. Functionally, component of the Arp2/3 complex, a multiprotein complex that mediates actin polymerization upon stimulation by nucleation-promoting factor (NPF). The Arp2/3 complex mediates the formation of branched actin networks in the cytoplasm, providing the force for cell motility. In addition to its role in the cytoplasmic cytoskeleton, the Arp2/3 complex also promotes actin polymerization in the nucleus, thereby regulating gene transcription and repair of damaged DNA. The Arp2/3 complex promotes homologous recombination (HR) repair in response to DNA damage by promoting nuclear actin polymerization, leading to drive motility of double-strand breaks (DSBs). The chain is Actin-related protein 2/3 complex subunit 1B from Homo sapiens (Human).